The primary structure comprises 1219 residues: Pheromone-regulated membrane protein 10 (1219 aa).

Positions 1-11 are enriched in basic and acidic residues; it reads MMRTQSDEHVA. Disordered regions lie at residues 1–273, 303–490, 503–533, and 555–713; these read MMRT…IERE, LASF…DPFT, HDDD…EDYV, and EGNK…RPVK. A compositionally biased stretch (acidic residues) spans 42-53; that stretch reads DENDDGHDDSDE. Residues 57–68 show a composition bias toward low complexity; the sequence is SVVIPTPSVVIV. Positions 104 to 115 are enriched in polar residues; that stretch reads LKSPGTPTTYSP. Residues 136-155 show a composition bias toward low complexity; sequence GSSLSSTTLMNTLLNSSGLG. Composition is skewed to acidic residues over residues 159 to 171 and 219 to 231; these read TESE…DEEV and QEEE…DDDG. Basic and acidic residues-rich tracts occupy residues 259 to 273, 330 to 346, and 395 to 421; these read ADRA…IERE, DDQR…RREN, and LDRR…EKER. Over residues 422-432 the composition is skewed to basic residues; sequence QHHHHNHHHHH. Positions 435-446 are enriched in polar residues; that stretch reads ETGPNTGASSPF. Residues 448–470 show a composition bias toward basic and acidic residues; it reads EEEKDREAEEAEILRDQARDLVN. Positions 565-577 are enriched in low complexity; sequence TTVGDGTSTGDVS. The span at 598 to 615 shows a compositional bias: basic residues; it reads KSKTKTTQKLGLKKKKKE. Basic and acidic residues predominate over residues 616-641; it reads LLKIIEDQRKEKEENKKRPKWYDKSR. The span at 642–652 shows a compositional bias: low complexity; the sequence is STSPSPGGTPA. The segment covering 653-673 has biased composition (basic residues); that stretch reads PHHHHHIPGLHLHHHTKGHQR. A compositionally biased stretch (basic and acidic residues) spans 693–713; the sequence is GGDKPPDRPRSLRSEALRPVK. Transmembrane regions (helical) follow at residues 864-884, 888-908, 918-938, 945-965, 983-1003, 1021-1041, 1049-1069, 1075-1095, 1100-1120, and 1184-1204; these read PPWL…PYAF, WADI…QIIV, VFEV…GTIS, FCFA…YIVL, MFYA…GAVV, LDPL…ALVN, PSML…GANI, SSYL…NLYS, GLAF…GVAS, and LGFT…AATL.

Belongs to the ThrE exporter (TC 2.A.79) family.

It localises to the membrane. In Yarrowia lipolytica (strain CLIB 122 / E 150) (Yeast), this protein is Pheromone-regulated membrane protein 10.